Here is a 599-residue protein sequence, read N- to C-terminus: Estrogen receptor (599 aa).

The segment at 1 to 188 (MTMTLHTKAS…IMESAKETRY (188 aa)) is modulating (transactivation AF-1); mediates interaction with MACROD1. A glycan (O-linked (GlcNAc) serine) is linked at Ser10. The segment at 35 to 47 (MERALGEVYVDNS) is required for interaction with NCOA1. Positions 35 to 178 (MERALGEVYV…LSSSNEKGNM (144 aa)) are interaction with DDX5; self-association. An O-linked (GlcNAc) threonine glycan is attached at Thr50. Residues Ser108 and Ser110 each carry the phosphoserine; by CDK2 modification. Phosphoserine is present on Ser122. The segment at 147–175 (DTGPPAFYRSNSDNRRQNGRERLSSSNEK) is disordered. A compositionally biased stretch (basic and acidic residues) spans 158-169 (SDNRRQNGRERL). At Ser171 the chain carries Phosphoserine; by CK2. 2 NR C4-type zinc fingers span residues 189 to 209 (CAVC…CEGC) and 225 to 249 (CPAT…LRKC). The segment at residues 189-254 (CAVCNDYASG…RLRKCYEVGM (66 aa)) is a DNA-binding region (nuclear receptor). Residues 189 to 314 (CAVCNDYASG…TKKNSPALSL (126 aa)) are mediates interaction with DNTTIP2. Residues 255–314 (MKGGIRKDRRGGRMLKHKRQRDDLEGRNEMGASGDMRAANLWPSPLVIKHTKKNSPALSL) are hinge. Residue Arg264 is modified to Asymmetric dimethylarginine; by PRMT1. Residues 266–599 (GRMLKHKRQR…PEAEGFPNTI (334 aa)) are interaction with AKAP13. A self-association region spans residues 268-599 (MLKHKRQRDD…PEAEGFPNTI (332 aa)). Residues 315–551 (TADQMVSALL…DLLLEMLDAH (237 aa)) enclose the NR LBD domain. The transactivation AF-2 stretch occupies residues 315–599 (TADQMVSALL…PEAEGFPNTI (285 aa)). Glu357 and Arg398 together coordinate 17beta-estradiol. Residue Cys451 is the site of S-palmitoyl cysteine attachment. His528 is a 17beta-estradiol binding site. At Tyr541 the chain carries Phosphotyrosine; by Tyr-kinases. Residues 557–581 (ASRMGVPPEEPSQTQLATTSSTSAH) form a disordered region. Residues 568-581 (SQTQLATTSSTSAH) are compositionally biased toward low complexity. O-linked (GlcNAc) threonine glycosylation is present at Thr575.

The protein belongs to the nuclear hormone receptor family. NR3 subfamily. As to quaternary structure, interacts with BCAS3. Binds DNA as a homodimer. Can form a heterodimer with ESR2. Interacts with coactivator NCOA5. Interacts with PELP1, the interaction is enhanced by 17-beta-estradiol; the interaction increases ESR1 transcriptional activity. Interacts with NCOA7; the interaction is ligand-inducible. Interacts with AKAP13, CUEDC2, HEXIM1, KDM5A, MAP1S, SMARD1, and UBE1C. Interacts with MUC1; the interaction is stimulated by 7 beta-estradiol (E2) and enhances ESR1-mediated transcription. Interacts with DNTTIP2, and UIMC1. Interacts with KMT2D/MLL2. Interacts with ATAD2; the interaction is enhanced by estradiol. Interacts with KIF18A and LDB1. Interacts with RLIM (via its C-terminus). Interacts with MACROD1. Interacts with SH2D4A and PLCG. Interacts with SH2D4A; the interaction blocks binding to PLCG and inhibits estrogen-induced cell proliferation. Interacts with DYNLL1. Interacts with CCDC62; the interaction requires estradiol and appears to enhance the transcription of target genes. Interacts with NR2C1; the interaction prevents homodimerization of ESR1 and suppresses its transcriptional activity and cell growth. Interacts with DNAAF4. Interacts with PRMT2. Interacts with RBFOX2. Interacts with EP300; the interaction is estrogen-dependent and enhanced by CITED1. Interacts with CITED1; the interaction is estrogen-dependent. Interacts with FAM120B, FOXL2, PHB2 and SLC30A9. Interacts with coactivators NCOA3 and NCOA6. Interacts with STK3/MST2 only in the presence of SAV1 and vice-versa. Binds to CSNK1D. Interacts with NCOA2; NCOA2 can interact with ESR1 AF-1 and AF-2 domains simultaneously and mediate their transcriptional synergy. Interacts with DDX5. Interacts with NCOA1; the interaction seems to require a self-association of N-terminal and C-terminal regions. Interacts with ZNF366, DDX17, NFKB1, RELA, SP1 and SP3. Interacts with NRIP1. Interacts with GPER1; the interaction occurs in an estrogen-dependent manner. Interacts with CLOCK and the interaction is stimulated by estrogen. Interacts with BCAS3. Interacts with TRIP4 (ufmylated); estrogen dependent. Interacts with LMTK3; the interaction phosphorylates ESR1 (in vitro) and protects it against proteasomal degradation. Interacts with CCAR2 (via N-terminus) in a ligand-independent manner. Interacts with ZFHX3. Interacts with SFR1 in a ligand-dependent and -independent manner. Interacts with DCAF13, LATS1 and DCAF1; regulates ESR1 ubiquitination and ubiquitin-mediated proteasomal degradation. Interacts (via DNA-binding domain) with POU4F2 isoform 2 (C-terminus); this interaction increases the estrogen receptor ESR1 transcriptional activity in a DNA- and ligand 17-beta-estradiol-independent manner. Interacts with ESRRB isoform 1. Interacts with UBE3A and WBP2. Interacts with GTF2B. Interacts with RBM39. In the absence of hormonal ligand, interacts with TACC1. Interacts with PI3KR1 or PI3KR2 and PTK2/FAK1. Interacts with SRC. Interacts with BAG1; the interaction is promoted in the absence of estradiol (17-beta-estradiol/E2). Interacts with and ubiquitinated by STUB1; the interaction is promoted in the absence of estradiol (17-beta-estradiol/E2). Interacts with NEDD8. Phosphorylated by cyclin A/CDK2 and CK1. Phosphorylation probably enhances transcriptional activity. Dephosphorylation at Ser-122 by PPP5C inhibits its transactivation activity. Phosphorylated by LMTK3 (in vitro). In terms of processing, ubiquitinated. Deubiquitinated by OTUB1. Post-translationally, palmitoylated at Cys-451 by ZDHHC7 and ZDHHC21. This modification is required for plasma membrane targeting and for rapid intracellular signaling via ERK and AKT kinases and cAMP generation, but not for signaling mediated by the nuclear hormone receptor. Ubiquitinated; regulated by LATS1 via DCAF1 it leads to ESR1 proteasomal degradation. Deubiquitinated by OTUB1. Ubiquitinated by STUB1/CHIP; in the CA1 hippocampal region following loss of endogenous circulating estradiol (17-beta-estradiol/E2). Ubiquitinated by UBR5, leading to its degradation: UBR5 specifically recognizes and binds ligand-bound ESR1 when it is not associated with coactivators (NCOAs). In presence of NCOAs, the UBR5-degron is not accessible, preventing its ubiquitination and degradation. In terms of processing, dimethylated by PRMT1 at Arg-264. The methylation may favor cytoplasmic localization. Demethylated by JMJD6 at Arg-264.

Its subcellular location is the nucleus. It is found in the cytoplasm. The protein resides in the golgi apparatus. It localises to the cell membrane. Functionally, nuclear hormone receptor. The steroid hormones and their receptors are involved in the regulation of eukaryotic gene expression and affect cellular proliferation and differentiation in target tissues. Ligand-dependent nuclear transactivation involves either direct homodimer binding to a palindromic estrogen response element (ERE) sequence or association with other DNA-binding transcription factors, such as AP-1/c-Jun, c-Fos, ATF-2, Sp1 and Sp3, to mediate ERE-independent signaling. Ligand binding induces a conformational change allowing subsequent or combinatorial association with multiprotein coactivator complexes through LXXLL motifs of their respective components. Mutual transrepression occurs between the estrogen receptor (ER) and NF-kappa-B in a cell-type specific manner. Decreases NF-kappa-B DNA-binding activity and inhibits NF-kappa-B-mediated transcription from the IL6 promoter and displace RELA/p65 and associated coregulators from the promoter. Recruited to the NF-kappa-B response element of the CCL2 and IL8 promoters and can displace CREBBP. Present with NF-kappa-B components RELA/p65 and NFKB1/p50 on ERE sequences. Can also act synergistically with NF-kappa-B to activate transcription involving respective recruitment adjacent response elements; the function involves CREBBP. Can activate the transcriptional activity of TFF1. Also mediates membrane-initiated estrogen signaling involving various kinase cascades. Essential for MTA1-mediated transcriptional regulation of BRCA1 and BCAS3. Maintains neuronal survival in response to ischemic reperfusion injury when in the presence of circulating estradiol (17-beta-estradiol/E2). This Mus musculus (Mouse) protein is Estrogen receptor (Esr1).